Consider the following 348-residue polypeptide: Farnesoic acid carboxyl-O-methyltransferase (348 aa).

Position 16 (Tyr-16) interacts with S-adenosyl-L-methionine. Substrate-binding positions include Tyr-16 and 19–23; that span reads HSKYQ. S-adenosyl-L-methionine is bound by residues Gly-57, 57–58, Asn-63, 94–97, 123–125, and 140–142; these read GC, FNDS, SFF, and SYS. Residue 141–145 coordinates substrate; sequence YSLHF. Positions 162, 247, and 249 each coordinate Mg(2+).

The protein belongs to the methyltransferase superfamily. SABATH family. In terms of assembly, homodimer. The cofactor is Mg(2+). As to expression, mostly expressed in leaves and, at very low levels, in roots, stems, flowers and siliques.

It carries out the reaction (2E,6E)-farnesoate + S-adenosyl-L-methionine = methyl (2E,6E)-farnesoate + S-adenosyl-L-homocysteine. The enzyme catalyses juvenile hormone III carboxylate + S-adenosyl-L-methionine = juvenile hormone III + S-adenosyl-L-homocysteine. Its pathway is sesquiterpene biosynthesis. Its activity is regulated as follows. Activated by Mn(2+) ions. Strongly inhibited by Cu(2+), Zn(2+), Fe(3+) and Fe(2+) ions. Moderately inhibited by Na(+) and Ca(2+) ions. Rapidly degraded at temperatures above 40 degrees Celsius. May catalyze the production of the insect juvenile hormone methyl farnesoate (MeFA) to trigger defense against insect herbivory. In Arabidopsis thaliana (Mouse-ear cress), this protein is Farnesoic acid carboxyl-O-methyltransferase.